Here is a 465-residue protein sequence, read N- to C-terminus: ATP-dependent protease ATPase subunit HslU (465 aa).

Residues V19 and 61-66 (GVGKTE) each bind ATP. Residues 153–175 (LFQSDGSDGDDETTEQDSHDEIR) form a disordered region. ATP is bound by residues D279, E343, and R415.

Belongs to the ClpX chaperone family. HslU subfamily. In terms of assembly, a double ring-shaped homohexamer of HslV is capped on each side by a ring-shaped HslU homohexamer. The assembly of the HslU/HslV complex is dependent on binding of ATP.

The protein resides in the cytoplasm. Its function is as follows. ATPase subunit of a proteasome-like degradation complex; this subunit has chaperone activity. The binding of ATP and its subsequent hydrolysis by HslU are essential for unfolding of protein substrates subsequently hydrolyzed by HslV. HslU recognizes the N-terminal part of its protein substrates and unfolds these before they are guided to HslV for hydrolysis. The chain is ATP-dependent protease ATPase subunit HslU from Oceanobacillus iheyensis (strain DSM 14371 / CIP 107618 / JCM 11309 / KCTC 3954 / HTE831).